A 1415-amino-acid polypeptide reads, in one-letter code: Non-structural polyprotein 1AB (1415 aa).

Residues 104-142 (KLIHKANALQERLRLSQEEKATLALDVQFLQHENVRLKE) are a coiled coil. A run of 5 helical transmembrane segments spans residues 154–174 (MKWI…GGYA), 239–259 (VFYY…LAIG), 286–306 (VLPT…TLMV), 313–333 (LLAI…LCFM), and 344–364 (GLIA…LTGT). Catalysis depends on charge relay system; for serine protease activity residues histidine 461, aspartate 489, and serine 551. The stretch at 587 to 616 (VKAPSRVELLKEEIERLKAQLNSAAENPAT) forms a coiled coil. Tyrosine 693 carries the post-translational modification O-(5'-phospho-RNA)-tyrosine. The disordered stretch occupies residues 753 to 813 (FDQAKPTPAP…KNEPQPYSQT (61 aa)). Basic and acidic residues predominate over residues 783-795 (SQKKEKQLEHEQQ). Positions 800–813 (TKPQKNEPQPYSQT) are enriched in polar residues. Residues 1160-1286 (KHFIEFDWTR…TTPSVPDDYE (127 aa)) enclose the RdRp catalytic domain.

This sequence belongs to the astroviridae polyprotein 1AB family. In terms of assembly, monomer. Post-translationally, cleaved by the viral and host proteases. The protease is probably autocatalytically cleaved.

Its subcellular location is the host membrane. The catalysed reaction is RNA(n) + a ribonucleoside 5'-triphosphate = RNA(n+1) + diphosphate. Its function is as follows. Responsible for the cleavage of the polyprotein into functional products. Covalently attached to the 5' extremity of the genomic and subgenomic RNAs. It may serve as a primer for the replicase. The polypeptide is Non-structural polyprotein 1AB (ORF1) (Human astrovirus-4 (HAstV-4)).